We begin with the raw amino-acid sequence, 144 residues long: D-aminoacyl-tRNA deacylase (144 aa).

A Gly-cisPro motif, important for rejection of L-amino acids motif is present at residues 136–137; it reads GP.

It belongs to the DTD family. Homodimer.

It is found in the cytoplasm. The enzyme catalyses glycyl-tRNA(Ala) + H2O = tRNA(Ala) + glycine + H(+). It carries out the reaction a D-aminoacyl-tRNA + H2O = a tRNA + a D-alpha-amino acid + H(+). An aminoacyl-tRNA editing enzyme that deacylates mischarged D-aminoacyl-tRNAs. Also deacylates mischarged glycyl-tRNA(Ala), protecting cells against glycine mischarging by AlaRS. Acts via tRNA-based rather than protein-based catalysis; rejects L-amino acids rather than detecting D-amino acids in the active site. By recycling D-aminoacyl-tRNA to D-amino acids and free tRNA molecules, this enzyme counteracts the toxicity associated with the formation of D-aminoacyl-tRNA entities in vivo and helps enforce protein L-homochirality. This is D-aminoacyl-tRNA deacylase from Aliivibrio fischeri (strain MJ11) (Vibrio fischeri).